The sequence spans 78 residues: Chassatide C4 (78 aa).

The signal sequence occupies residues 1–23; it reads MAKFATQLFLLTASVVMLEVQSS. The propeptide at 24 to 42 is removed in mature form; that stretch reads IVIMQDPDLGRKLIMNPAN. The segment at residues 43 to 71 is a cross-link (cyclopeptide (Gly-Asn)); sequence GASCGETCFTGICFTAGCSCNPWPTCTRN. 3 disulfides stabilise this stretch: C46-C60, C50-C62, and C55-C68. Residues 72 to 78 constitute a propeptide, removed in mature form; it reads GLNPESI.

This is a cyclic peptide.

Functionally, probably participates in a plant defense mechanism. The polypeptide is Chassatide C4 (Chassalia chartacea (Chassalia curviflora)).